The sequence spans 123 residues: Transmembrane protein 80 (123 aa).

4 consecutive transmembrane segments (helical) span residues 2-22 (LFHL…LMIV), 35-55 (LALD…QLYL), 68-88 (LAAS…FLLW), and 102-122 (VLLV…ADFI).

Its subcellular location is the membrane. It is found in the cell projection. It localises to the cilium. This is Transmembrane protein 80 (Tmem80) from Mus musculus (Mouse).